The sequence spans 76 residues: Small ribosomal subunit protein bS21A (76 aa).

Basic and acidic residues predominate over residues 35–52; it reads HYEKPSEKRAREKAEAVR. The tract at residues 35-76 is disordered; it reads HYEKPSEKRAREKAEAVRRARKLARKRAQREGLVSGRPAAAR. Residues 53-62 show a composition bias toward basic residues; that stretch reads RARKLARKRA.

This sequence belongs to the bacterial ribosomal protein bS21 family.

This Chelativorans sp. (strain BNC1) protein is Small ribosomal subunit protein bS21A.